Consider the following 102-residue polypeptide: N(4)-acetylcytidine amidohydrolase (102 aa).

The ASCH domain occupies 6–93 (TFFSRFEQDI…IKEIYPGLDE (88 aa)). Lysine 20 serves as the catalytic Proton acceptor. The active-site Nucleophile is threonine 23. Catalysis depends on glutamate 73, which acts as the Proton donor.

It belongs to the N(4)-acetylcytidine amidohydrolase family.

It catalyses the reaction N(4)-acetylcytidine + H2O = cytidine + acetate + H(+). It carries out the reaction N(4)-acetyl-2'-deoxycytidine + H2O = 2'-deoxycytidine + acetate + H(+). The enzyme catalyses N(4)-acetylcytosine + H2O = cytosine + acetate + H(+). Its function is as follows. Catalyzes the hydrolysis of N(4)-acetylcytidine (ac4C). The chain is N(4)-acetylcytidine amidohydrolase from Serratia proteamaculans (strain 568).